The sequence spans 91 residues: Histone H1, sperm (91 aa).

Positions 1 to 25 are disordered; sequence PGSPQKRAASPRKSPRKGSPKKSPM. Residues 9 to 20 show a composition bias toward basic residues; the sequence is ASPRKSPRKGSP. Residues 18–91 enclose the H15 domain; sequence GSPKKSPMIR…TGATGRFRVG (74 aa).

The protein belongs to the histone H1/H5 family.

It localises to the nucleus. The protein localises to the chromosome. Histones H1 are necessary for the condensation of nucleosome chains into higher-order structures. This is Histone H1, sperm from Sphaerechinus granularis (Purple sea urchin).